A 158-amino-acid polypeptide reads, in one-letter code: Glycosyl-phosphatidylinositol-anchored molecule-like protein (158 aa).

An N-terminal signal peptide occupies residues 1–17 (MLLFALLLAMELPLVAA). A UPAR/Ly6 domain is found at 29–134 (LRCHDCAVIN…DEVTEEELPE (106 aa)). 5 cysteine pairs are disulfide-bonded: cysteine 31-cysteine 55, cysteine 34-cysteine 42, cysteine 48-cysteine 73, cysteine 77-cysteine 104, and cysteine 105-cysteine 110.

The protein resides in the cell membrane. Functionally, may play a role in the apoptotic pathway or cell-cycle regulation induced by p53/TP53 after DNA damage. The chain is Glycosyl-phosphatidylinositol-anchored molecule-like protein (GML) from Homo sapiens (Human).